The sequence spans 790 residues: Exocyst complex component SEC15A (790 aa).

The stretch at 49–70 (LVHQLKNVARKKEAEIEDLCKT) forms a coiled coil.

Belongs to the SEC15 family. As to quaternary structure, the exocyst complex is composed of SEC3, SEC5, SEC6, SEC8, SEC10, EXO70A1 and EXO84B.

It localises to the cytoplasm. The protein resides in the cytosol. Component of the exocyst complex involved in the docking of exocytic vesicles with fusion sites on the plasma membrane during regulated or polarized secretion. Involved in polarized cell growth and organ morphogenesis. During cytokinesis, involved in cell plate initiation, cell plate maturation and formation of new primary cell wall. In Arabidopsis thaliana (Mouse-ear cress), this protein is Exocyst complex component SEC15A (SEC15A).